The following is a 442-amino-acid chain: D-inositol 3-phosphate glycosyltransferase (442 aa).

His-26 is a 1D-myo-inositol 3-phosphate binding site. UDP-N-acetyl-alpha-D-glucosamine is bound by residues 32–33 (QP) and Gly-40. 1D-myo-inositol 3-phosphate is bound by residues 37 to 42 (DAGGMN), Lys-95, Tyr-128, Thr-152, and Arg-172. Positions 246, 251, and 304 each coordinate UDP-N-acetyl-alpha-D-glucosamine. Tyr-313, Arg-314, and Ala-316 together coordinate Mg(2+). Residues Glu-326 and Glu-334 each coordinate UDP-N-acetyl-alpha-D-glucosamine. Thr-340 provides a ligand contact to Mg(2+).

The protein belongs to the glycosyltransferase group 1 family. MshA subfamily. In terms of assembly, homodimer.

It carries out the reaction 1D-myo-inositol 3-phosphate + UDP-N-acetyl-alpha-D-glucosamine = 1D-myo-inositol 2-acetamido-2-deoxy-alpha-D-glucopyranoside 3-phosphate + UDP + H(+). Functionally, catalyzes the transfer of a N-acetyl-glucosamine moiety to 1D-myo-inositol 3-phosphate to produce 1D-myo-inositol 2-acetamido-2-deoxy-glucopyranoside 3-phosphate in the mycothiol biosynthesis pathway. This Mycolicibacterium gilvum (strain PYR-GCK) (Mycobacterium gilvum (strain PYR-GCK)) protein is D-inositol 3-phosphate glycosyltransferase.